We begin with the raw amino-acid sequence, 422 residues long: Nuclear hormone receptor family member nhr-54 (422 aa).

Positions 14-92 (SVKCAICYKA…LGMTTENVRT (79 aa)) form a DNA-binding region, nuclear receptor. 2 NR C4-type zinc fingers span residues 17-37 (CAIC…CRAC) and 53-80 (CTRK…FKKC). The region spanning 161–422 (PDDDVIVELN…VFTEPEFFRV (262 aa)) is the NR LBD domain.

This sequence belongs to the nuclear hormone receptor family.

It is found in the nucleus. Orphan nuclear receptor. The sequence is that of Nuclear hormone receptor family member nhr-54 (nhr-54) from Caenorhabditis elegans.